Reading from the N-terminus, the 450-residue chain is BAG family molecular chaperone regulator 5 (450 aa).

BAG domains follow at residues serine 9–alanine 86, glutamate 95–alanine 167, serine 182–glutamate 260, serine 275–glutamate 350, and glutamate 365–aspartate 442.

Binds to the ATPase domain of HSP/HSC70 chaperones.

In terms of biological role, co-chaperone for HSP/HSP70 proteins. It functions as a nucleotide-exchange factor promoting the release of ADP from HSP70, thereby activating HSP70-mediated protein refolding. The polypeptide is BAG family molecular chaperone regulator 5 (BAG5) (Gallus gallus (Chicken)).